We begin with the raw amino-acid sequence, 749 residues long: Polyribonucleotide nucleotidyltransferase (749 aa).

Positions 487 and 493 each coordinate Mg(2+). Residues 554–613 (PSTTTIKIDKDKIRDIIGPGGKIIKEICETSGAKIDISDDGTVSVYASDRDKLKVALDKI) enclose the KH domain. Positions 623-691 (GEIFNGTVVK…NKGKAKLTIK (69 aa)) constitute an S1 motif domain. The segment at 691–749 (KNADKDKSSNNTKPKTNVNNTNKDNSEPEQRRDSSKKRAWNEDNNAETAEVITERKYFN) is disordered. Positions 699-713 (SNNTKPKTNVNNTNK) are enriched in low complexity. Residues 714-723 (DNSEPEQRRD) show a composition bias toward basic and acidic residues.

It belongs to the polyribonucleotide nucleotidyltransferase family. Requires Mg(2+) as cofactor.

It is found in the cytoplasm. It carries out the reaction RNA(n+1) + phosphate = RNA(n) + a ribonucleoside 5'-diphosphate. In terms of biological role, involved in mRNA degradation. Catalyzes the phosphorolysis of single-stranded polyribonucleotides processively in the 3'- to 5'-direction. This chain is Polyribonucleotide nucleotidyltransferase, found in Rickettsia conorii (strain ATCC VR-613 / Malish 7).